Reading from the N-terminus, the 629-residue chain is Coiled-coil domain-containing protein 120 (629 aa).

Residues 31–70 (RLRGLLDRQRALQEALSVKLQELRKVCLQEAELTGQLPPE) form an involved in CYTH2-binding region. Residues 109-173 (ELALEALERE…LRDFRARLGL (65 aa)) adopt a coiled-coil conformation. 2 stretches are compositionally biased toward low complexity: residues 209-219 (HSESSSLSESG) and 279-294 (ASPTSPTRSLPRSASS). The interval 209 to 356 (HSESSSLSES…LFAARTRRSN (148 aa)) is disordered. Over residues 323 to 332 (RQWSGSQDSQ) the composition is skewed to polar residues. A phosphoserine mark is found at S355 and S357. Disordered regions lie at residues 399 to 432 (QPVPSFSSRTTGPPDPPRAARPSSAAPASRGAPR) and 602 to 629 (PSQAPLPHSRSFTAPPVSGRYGGAFTDG). Positions 418–432 (ARPSSAAPASRGAPR) are enriched in low complexity. Omega-N-methylarginine is present on R432.

In terms of assembly, interacts with NIN and CEP170; leading to recruit them to centrosomes. Interacts with CYTH2; this interaction is direct and stabilizes CCDC120, possibly by preventing ubiquitination. In terms of processing, ubiquitinated; interaction with CYTH2 may prevent ubiquitination.

It is found in the cytoplasm. Its subcellular location is the cytoskeleton. The protein resides in the microtubule organizing center. It localises to the centrosome. The protein localises to the centriole. It is found in the cell projection. Its subcellular location is the neuron projection. The protein resides in the growth cone. It localises to the endosome. Its function is as follows. Centriolar protein required for centriole subdistal appendage assembly and microtubule anchoring in interphase cells. Together with CCDC68, cooperate with subdistal appendage components ODF2, NIN and CEP170 for hierarchical subdistal appendage assembly. Recruits NIN and CEP170 to centrosomes. Also required for neurite growth. Localizes CYTH2 to vesicles to allow its transport along neurites, and subsequent ARF6 activation and neurite growth. The sequence is that of Coiled-coil domain-containing protein 120 from Mus musculus (Mouse).